The following is a 350-amino-acid chain: tRNA uridine(34) hydroxylase (350 aa).

The region spanning 146–240 (DDPDAVFIDM…YARRAREQGL (95 aa)) is the Rhodanese domain. Residue Cys200 is the Cysteine persulfide intermediate of the active site. Positions 319-328 (RRRRAGRENG) are enriched in basic and acidic residues. Residues 319 to 350 (RRRRAGRENGNKIFNKSRGRLNSKLSIPDPAE) are disordered.

The protein belongs to the TrhO family.

The enzyme catalyses uridine(34) in tRNA + AH2 + O2 = 5-hydroxyuridine(34) in tRNA + A + H2O. Catalyzes oxygen-dependent 5-hydroxyuridine (ho5U) modification at position 34 in tRNAs. The sequence is that of tRNA uridine(34) hydroxylase from Salmonella agona (strain SL483).